We begin with the raw amino-acid sequence, 118 residues long: MGDKEFVWAIKNGDLDAVKEFVLGGEDVNRTLDGGRKPMHYAADCGQDEVLEFLLSKGANINAADKHGITPLLSACYEGHRKCVELLLSKGADKTVKGPDGLNALESTDNQAIKDLLH.

ANK repeat units lie at residues 1–30, 34–65, and 67–98; these read MGDK…DVNR, GGRK…NAAD, and HGIT…TVKG.

This sequence belongs to the myotrophin family.

It localises to the cytoplasm. Its subcellular location is the nucleus. The protein resides in the perinuclear region. Regulates NF-kappa-B transcription factor activity. Promotes growth of cardiomyocytes, but not cardiomyocyte proliferation. Promotes cardiac muscle hypertrophy. Plays a role in the regulation of the growth of actin filaments. Inhibits the activity of the F-actin-capping protein complex. The polypeptide is Myotrophin (mtpn) (Xenopus tropicalis (Western clawed frog)).